A 258-amino-acid polypeptide reads, in one-letter code: Hydroxyacylglutathione hydrolase (258 aa).

Zn(2+) is bound by residues His-56, His-58, Asp-60, His-61, His-112, Asp-132, and His-170.

The protein belongs to the metallo-beta-lactamase superfamily. Glyoxalase II family. In terms of assembly, monomer. The cofactor is Zn(2+).

The enzyme catalyses an S-(2-hydroxyacyl)glutathione + H2O = a 2-hydroxy carboxylate + glutathione + H(+). Its pathway is secondary metabolite metabolism; methylglyoxal degradation; (R)-lactate from methylglyoxal: step 2/2. In terms of biological role, thiolesterase that catalyzes the hydrolysis of S-D-lactoyl-glutathione to form glutathione and D-lactic acid. This chain is Hydroxyacylglutathione hydrolase, found in Pseudomonas aeruginosa (strain LESB58).